We begin with the raw amino-acid sequence, 387 residues long: Chaperone protein DnaJ (387 aa).

In terms of domain architecture, J spans 5 to 70; sequence DYYEVLGVAK…QKRAAYDRFG (66 aa). The CR-type zinc-finger motif lies at 140-218; sequence GKTETIRLPT…CGGAGRVTRE (79 aa). Residues Cys153, Cys156, Cys170, Cys173, Cys192, Cys195, Cys206, and Cys209 each coordinate Zn(2+). 4 CXXCXGXG motif repeats span residues 153–160, 170–177, 192–199, and 206–213; these read CEVCAGSG, CPTCGGYG, CPNCQGRG, and CAACGGAG.

Belongs to the DnaJ family. In terms of assembly, homodimer. It depends on Zn(2+) as a cofactor.

It is found in the cytoplasm. Its function is as follows. Participates actively in the response to hyperosmotic and heat shock by preventing the aggregation of stress-denatured proteins and by disaggregating proteins, also in an autonomous, DnaK-independent fashion. Unfolded proteins bind initially to DnaJ; upon interaction with the DnaJ-bound protein, DnaK hydrolyzes its bound ATP, resulting in the formation of a stable complex. GrpE releases ADP from DnaK; ATP binding to DnaK triggers the release of the substrate protein, thus completing the reaction cycle. Several rounds of ATP-dependent interactions between DnaJ, DnaK and GrpE are required for fully efficient folding. Also involved, together with DnaK and GrpE, in the DNA replication of plasmids through activation of initiation proteins. In Methylobacterium sp. (strain 4-46), this protein is Chaperone protein DnaJ.